The primary structure comprises 357 residues: Dihydroorotate dehydrogenase (quinone) (357 aa).

FMN-binding positions include 67–71 (AGFDK) and Thr91. Lys71 is a binding site for substrate. 116–120 (NRMGF) contributes to the substrate binding site. FMN is bound by residues Asn153 and Asn186. Residue Asn186 participates in substrate binding. Ser189 acts as the Nucleophile in catalysis. Asn191 provides a ligand contact to substrate. Lys228 and Thr256 together coordinate FMN. 257–258 (NT) is a substrate binding site. Residues Gly282, Gly311, and 332-333 (YT) each bind FMN.

Belongs to the dihydroorotate dehydrogenase family. Type 2 subfamily. Monomer. Requires FMN as cofactor.

It is found in the cell membrane. It carries out the reaction (S)-dihydroorotate + a quinone = orotate + a quinol. Its pathway is pyrimidine metabolism; UMP biosynthesis via de novo pathway; orotate from (S)-dihydroorotate (quinone route): step 1/1. Catalyzes the conversion of dihydroorotate to orotate with quinone as electron acceptor. This is Dihydroorotate dehydrogenase (quinone) from Arthrobacter sp. (strain FB24).